The primary structure comprises 536 residues: Copine-1 (536 aa).

C2 domains follow at residues 1-113 and 122-244; these read MAHC…TLPL and GRGT…ECIH. Ca(2+) contacts are provided by D21, D27, D79, D81, D91, D152, and D158. K170 is subject to N6-acetyllysine. Residues D213, D215, and D221 each coordinate Ca(2+). The 203-residue stretch at 282 to 484 folds into the VWFA domain; that stretch reads QINFTVGVDF…AARDIVQFVP (203 aa).

It belongs to the copine family. In terms of assembly, homodimer; homodimerizes via its C2 domains. Interacts with p65/RELA (via N-terminus); this interaction induces proteolytic cleavage of p65/RELA subunit and inhibition of NF-kappa-B transcriptional activity. Interacts (via VWFA domain) with ACTB, CCDC22, MYCBP2, PPP5C, RDX and UBE2O. Ca(2+) is required as a cofactor. As to expression, expressed in liver, brain, heart, intestine, kidney and lung (at protein level).

It is found in the nucleus. Its subcellular location is the cytoplasm. The protein resides in the cell membrane. Calcium-dependent phospholipid-binding protein that plays a role in calcium-mediated intracellular processes. Involved in the TNF-alpha receptor signaling pathway in a calcium-dependent manner. Exhibits calcium-dependent phospholipid binding properties. Plays a role in neuronal progenitor cell differentiation; induces neurite outgrowth via a AKT-dependent signaling cascade and calcium-independent manner. May recruit target proteins to the cell membrane in a calcium-dependent manner. May function in membrane trafficking. Involved in TNF-alpha-induced NF-kappa-B transcriptional repression by inducing endoprotease processing of the transcription factor NF-kappa-B p65/RELA subunit. Also induces endoprotease processing of NF-kappa-B p50/NFKB1, p52/NFKB2, RELB and REL. This chain is Copine-1, found in Rattus norvegicus (Rat).